The chain runs to 85 residues: Large ribosomal subunit protein bL31B (85 aa).

The protein belongs to the bacterial ribosomal protein bL31 family. Type B subfamily. In terms of assembly, part of the 50S ribosomal subunit.

This Aliivibrio salmonicida (strain LFI1238) (Vibrio salmonicida (strain LFI1238)) protein is Large ribosomal subunit protein bL31B.